We begin with the raw amino-acid sequence, 81 residues long: uncharacterized protein (81 aa).

2 helical membrane-spanning segments follow: residues 1–21 (MTLF…FSLL) and 27–47 (IFIY…HHFF).

The protein resides in the membrane. This is an uncharacterized protein from Saccharomyces cerevisiae (strain ATCC 204508 / S288c) (Baker's yeast).